Here is a 454-residue protein sequence, read N- to C-terminus: MNIVILAAGMGKRMYSDLPKVLHPVAGRPMLAHVLDTARALSPSRLVVVVGHGAARVREAVAADDVAFAEQAQQLGTGHAVMQALPLLDDNQPTLVLYGDVPLTSAATLQALVAEAGAQRFGVLTVEMPDPTGYGRIVRDAAGSIVRIVEQKDATEAEKAIREINTGIIVCPTGHLRKWLSTLRNDNAQGEYYLTDTVERAVADGVETVSAQPAAVWETLGVNSKLQLAEVERIHQGNQARRLLEAGVTLLDPARIDVRGELTCGRDVTIDVGCVFEGRVHLEDGVRIGAHCVIRNSTVGAGAQVHPFCHIDEAKVGPAGRIGPYARLRPGTELGEDVHIGNFVEVKNAQVAAHSKANHLAYVGDATVGSRVNIGAGTITCNYDGVNKHRTVIEDDVFIGSDTQLVAPVTVRRGATLGAGTTLTKEAPADKLTLSRAKQLTIDAWQRPVKQPKQ.

Residues 1–225 (MNIVILAAGM…VWETLGVNSK (225 aa)) are pyrophosphorylase. UDP-N-acetyl-alpha-D-glucosamine contacts are provided by residues 6-9 (LAAG), K20, Q71, 76-77 (GT), 98-100 (YGD), G135, E150, N165, and N223. D100 is a Mg(2+) binding site. Residue N223 participates in Mg(2+) binding. Positions 226–246 (LQLAEVERIHQGNQARRLLEA) are linker. An N-acetyltransferase region spans residues 247–454 (GVTLLDPARI…WQRPVKQPKQ (208 aa)). Positions 329 and 347 each coordinate UDP-N-acetyl-alpha-D-glucosamine. Residue H359 is the Proton acceptor of the active site. Residues Y362 and N373 each contribute to the UDP-N-acetyl-alpha-D-glucosamine site. Residues A376, 382–383 (NY), S401, A419, and R436 each bind acetyl-CoA.

This sequence in the N-terminal section; belongs to the N-acetylglucosamine-1-phosphate uridyltransferase family. The protein in the C-terminal section; belongs to the transferase hexapeptide repeat family. Homotrimer. Mg(2+) is required as a cofactor.

The protein resides in the cytoplasm. It carries out the reaction alpha-D-glucosamine 1-phosphate + acetyl-CoA = N-acetyl-alpha-D-glucosamine 1-phosphate + CoA + H(+). The catalysed reaction is N-acetyl-alpha-D-glucosamine 1-phosphate + UTP + H(+) = UDP-N-acetyl-alpha-D-glucosamine + diphosphate. Its pathway is nucleotide-sugar biosynthesis; UDP-N-acetyl-alpha-D-glucosamine biosynthesis; N-acetyl-alpha-D-glucosamine 1-phosphate from alpha-D-glucosamine 6-phosphate (route II): step 2/2. It participates in nucleotide-sugar biosynthesis; UDP-N-acetyl-alpha-D-glucosamine biosynthesis; UDP-N-acetyl-alpha-D-glucosamine from N-acetyl-alpha-D-glucosamine 1-phosphate: step 1/1. It functions in the pathway bacterial outer membrane biogenesis; LPS lipid A biosynthesis. Functionally, catalyzes the last two sequential reactions in the de novo biosynthetic pathway for UDP-N-acetylglucosamine (UDP-GlcNAc). The C-terminal domain catalyzes the transfer of acetyl group from acetyl coenzyme A to glucosamine-1-phosphate (GlcN-1-P) to produce N-acetylglucosamine-1-phosphate (GlcNAc-1-P), which is converted into UDP-GlcNAc by the transfer of uridine 5-monophosphate (from uridine 5-triphosphate), a reaction catalyzed by the N-terminal domain. The protein is Bifunctional protein GlmU of Cupriavidus taiwanensis (strain DSM 17343 / BCRC 17206 / CCUG 44338 / CIP 107171 / LMG 19424 / R1) (Ralstonia taiwanensis (strain LMG 19424)).